The sequence spans 144 residues: Large ribosomal subunit protein uL13 (144 aa).

This sequence belongs to the universal ribosomal protein uL13 family. Part of the 50S ribosomal subunit.

Its function is as follows. This protein is one of the early assembly proteins of the 50S ribosomal subunit, although it is not seen to bind rRNA by itself. It is important during the early stages of 50S assembly. In Nitrosomonas europaea (strain ATCC 19718 / CIP 103999 / KCTC 2705 / NBRC 14298), this protein is Large ribosomal subunit protein uL13.